The primary structure comprises 152 residues: Ribosome maturation factor RimP (152 aa).

The protein belongs to the RimP family.

Its subcellular location is the cytoplasm. Required for maturation of 30S ribosomal subunits. The sequence is that of Ribosome maturation factor RimP from Pseudomonas aeruginosa (strain LESB58).